We begin with the raw amino-acid sequence, 212 residues long: Large ribosomal subunit protein uL3 (212 aa).

An N5-methylglutamine modification is found at glutamine 153.

The protein belongs to the universal ribosomal protein uL3 family. Part of the 50S ribosomal subunit. Forms a cluster with proteins L14 and L19. Methylated by PrmB.

Functionally, one of the primary rRNA binding proteins, it binds directly near the 3'-end of the 23S rRNA, where it nucleates assembly of the 50S subunit. This chain is Large ribosomal subunit protein uL3, found in Shewanella halifaxensis (strain HAW-EB4).